A 232-amino-acid chain; its full sequence is Imidazole glycerol phosphate synthase subunit HisF (232 aa).

Active-site residues include aspartate 11 and aspartate 130.

This sequence belongs to the HisA/HisF family. In terms of assembly, heterodimer of HisH and HisF.

It localises to the cytoplasm. It catalyses the reaction 5-[(5-phospho-1-deoxy-D-ribulos-1-ylimino)methylamino]-1-(5-phospho-beta-D-ribosyl)imidazole-4-carboxamide + L-glutamine = D-erythro-1-(imidazol-4-yl)glycerol 3-phosphate + 5-amino-1-(5-phospho-beta-D-ribosyl)imidazole-4-carboxamide + L-glutamate + H(+). It participates in amino-acid biosynthesis; L-histidine biosynthesis; L-histidine from 5-phospho-alpha-D-ribose 1-diphosphate: step 5/9. Functionally, IGPS catalyzes the conversion of PRFAR and glutamine to IGP, AICAR and glutamate. The HisF subunit catalyzes the cyclization activity that produces IGP and AICAR from PRFAR using the ammonia provided by the HisH subunit. This is Imidazole glycerol phosphate synthase subunit HisF from Listeria monocytogenes serotype 4a (strain HCC23).